A 402-amino-acid polypeptide reads, in one-letter code: Beta-peptidyl aminopeptidase BapA (402 aa).

Positions 1–29 (MTSTQRLWSGALPLLTALIVSIAATASLA) are cleaved as a signal peptide. S279 serves as the catalytic Nucleophile. Catalysis depends on proton donor/acceptor residues S317 and E319.

The protein belongs to the peptidase S58 family. In terms of assembly, heterooctamer of 4 heterodimers ((alpha:beta)4); each heterodimer is composed of an alpha subunit and a beta subunit processed from the same precursor. Post-translationally, autoproteolytic processing to generate the alpha and beta subunit is required for self-activation and is proposed to use a similar mechanism as substrate cleavage.

Its subcellular location is the periplasm. It catalyses the reaction Cleaves N-terminal beta-homoamino acids from peptides composed of 2 to 6 amino acids.. Inhibited by AEBSF (4-(2-aminoethyl)benzenesulfonyl fluoride, Pefabloc SC), ampicillin and AMP(hyd) (ampillicin-derived penicilloic acid). In terms of biological role, beta-aminopeptidase that can cleave synthetic beta-peptides which consist of backbone-elongated beta-amino acid residues that are not processed by common proteolytic enzymes. Can cleave the beta-peptides beta-homoVal-beta-homoAla-beta-homoLeu and beta-homoAla-beta-homoLeu. Requires a beta-amino acid at the N-terminus of peptide substrates and cleaves the peptide bond between the N-terminal beta-amino acid and the amino acid at the second position of tripeptidic substrates of the general structure H-betahXaa-Ile-betahTyr-OH according to the following preferences with regard to the side chain of the N-terminal beta-amino acid: aliphatic and aromatic &gt; OH-containing &gt; hydrogen, basic and polar. This Sphingosinicella xenopeptidilytica protein is Beta-peptidyl aminopeptidase BapA.